Consider the following 266-residue polypeptide: Undecaprenyl-diphosphatase (266 aa).

Helical transmembrane passes span 38-58, 80-100, 108-128, 136-156, 176-196, 217-237, and 245-265; these read SDMF…IIYW, LIVA…VLHF, PIAW…WAAA, ITWL…IFPG, AAAT…ASGY, IAFV…LAYI, and FAVY…TGLI.

The protein belongs to the UppP family.

It is found in the cell inner membrane. It carries out the reaction di-trans,octa-cis-undecaprenyl diphosphate + H2O = di-trans,octa-cis-undecaprenyl phosphate + phosphate + H(+). Its function is as follows. Catalyzes the dephosphorylation of undecaprenyl diphosphate (UPP). Confers resistance to bacitracin. The sequence is that of Undecaprenyl-diphosphatase from Rhizobium leguminosarum bv. trifolii (strain WSM2304).